We begin with the raw amino-acid sequence, 59 residues long: Chromatin protein Cren7 (59 aa).

The protein belongs to the Cren7 family. Monomer. In terms of processing, methylated at multiple sites, to varying extents.

It localises to the chromosome. The protein resides in the cytoplasm. Functionally, a chromatin protein, binds double-stranded DNA without sequence specificity. Constrains negative DNA supercoils. The polypeptide is Chromatin protein Cren7 (Pyrobaculum arsenaticum (strain DSM 13514 / JCM 11321 / PZ6)).